A 546-amino-acid chain; its full sequence is ATP-dependent RNA helicase DBP2 (546 aa).

The disordered stretch occupies residues 1-56 (MTYGGRDQQYNKTNYKSRGGDFRGGRNSDRNSYNDRPQGGNYRGGFGGRSNYNQPQ). An omega-N-methylarginine mark is found at arginine 18 and arginine 43. Residues 18–33 (RGGDFRGGRNSDRNSY) are compositionally biased toward basic and acidic residues. Residues serine 88 and serine 90 each carry the phosphoserine modification. The Q motif motif lies at 113–141 (TTFDEAGFPDYVLNEVKAEGFDKPTGIQC). The 176-residue stretch at 144-319 (WPMALSGRDM…ADYLNDPIQV (176 aa)) folds into the Helicase ATP-binding domain. An ATP-binding site is contributed by 157-164 (AATGSGKT). The DEAD box signature appears at 267–270 (DEAD). Positions 347 to 494 (RLNKYLETAS…NIPPELLKYD (148 aa)) constitute a Helicase C-terminal domain. Lysine 474 participates in a covalent cross-link: Glycyl lysine isopeptide (Lys-Gly) (interchain with G-Cter in ubiquitin). Residues 493–546 (YDRRSYGGGHPRYGGGRGGRGGYGRRGGYGGGRGGYGGNRQRDGGWGNRGRSNY) are disordered. The segment covering 498-540 (YGGGHPRYGGGRGGRGGYGRRGGYGGGRGGYGGNRQRDGGWGN) has biased composition (gly residues). An RNA-binding RGG-box region spans residues 505 to 530 (YGGGRGGRGGYGRRGGYGGGRGGYGG). Dimethylated arginine; alternate occurs at positions 509, 512, 518, and 525. Residues arginine 509, arginine 512, arginine 518, and arginine 525 each carry the omega-N-methylarginine; alternate modification.

Belongs to the DEAD box helicase family. DDX5/DBP2 subfamily. In terms of assembly, interacts with UPF1. Associates with polysomes.

Its subcellular location is the cytoplasm. The protein localises to the nucleus. The catalysed reaction is ATP + H2O = ADP + phosphate + H(+). Its function is as follows. ATP-dependent RNA helicase involved nonsense-mediated mRNA decay and ribosome biogenesis through rRNA processing. Associates directly with chromatin, correlating with transcriptional activity. Required for assembly of mRNA-binding proteins YRA1, NAB2, and MEX67 onto poly(A)+ RNA. This chain is ATP-dependent RNA helicase DBP2, found in Saccharomyces cerevisiae (strain ATCC 204508 / S288c) (Baker's yeast).